Here is a 245-residue protein sequence, read N- to C-terminus: Protein crossbronx (245 aa).

In terms of domain architecture, UBC core spans 20 to 177; it reads HQEYKILAEY…VQESIAESKA (158 aa).

It belongs to the ubiquitin-conjugating enzyme family. FTS subfamily.

This Drosophila mojavensis (Fruit fly) protein is Protein crossbronx (cbx).